A 254-amino-acid chain; its full sequence is PF03932 family protein CutC (254 aa).

This sequence belongs to the CutC family.

It localises to the cytoplasm. The sequence is that of PF03932 family protein CutC from Yersinia pseudotuberculosis serotype I (strain IP32953).